A 471-amino-acid chain; its full sequence is DENN domain-containing protein 2D (471 aa).

The 150-residue stretch at 55 to 204 (EYLLVVSLKK…AFPAPGKTVT (150 aa)) folds into the uDENN domain. The cDENN domain maps to 226-359 (HLEHVDFSSL…LQDDILDSLG (134 aa)). Residues 361–445 (GINELKTAEQ…QEAEKSKNPP (85 aa)) form the dDENN domain.

As to expression, in bronchial mucosa, mainly expressed in ciliated and basal epithelial cells and weakly in alveolar cells (at protein level). Tends to be down-regulated in lung cancers, immortalized bronchial epithelial cell lines and precancerous lesions.

Its subcellular location is the cytoplasm. Guanine nucleotide exchange factor (GEF) which may activate RAB9A and RAB9B. Promotes the exchange of GDP to GTP, converting inactive GDP-bound Rab proteins into their active GTP-bound form. This Homo sapiens (Human) protein is DENN domain-containing protein 2D (DENND2D).